We begin with the raw amino-acid sequence, 476 residues long: UDP-N-acetylmuramate--L-alanine ligase (476 aa).

Residue 125–131 (GTHGKTT) coordinates ATP.

Belongs to the MurCDEF family.

Its subcellular location is the cytoplasm. The catalysed reaction is UDP-N-acetyl-alpha-D-muramate + L-alanine + ATP = UDP-N-acetyl-alpha-D-muramoyl-L-alanine + ADP + phosphate + H(+). The protein operates within cell wall biogenesis; peptidoglycan biosynthesis. Functionally, cell wall formation. The protein is UDP-N-acetylmuramate--L-alanine ligase of Actinobacillus succinogenes (strain ATCC 55618 / DSM 22257 / CCUG 43843 / 130Z).